We begin with the raw amino-acid sequence, 321 residues long: Prephenate dehydratase (321 aa).

A Prephenate dehydratase domain is found at 3-189; that stretch reads RIAYLGPEGT…ARTRFVLVGR (187 aa). Residues 203–280 form the ACT domain; that stretch reads SAVLRIDNQP…ADVRYLGSWP (78 aa).

As to quaternary structure, homodimer.

It carries out the reaction prephenate + H(+) = 3-phenylpyruvate + CO2 + H2O. It participates in amino-acid biosynthesis; L-phenylalanine biosynthesis; phenylpyruvate from prephenate: step 1/1. The polypeptide is Prephenate dehydratase (pheA) (Mycobacterium bovis (strain ATCC BAA-935 / AF2122/97)).